A 67-amino-acid chain; its full sequence is Tachystatin-A2 (67 aa).

The N-terminal stretch at 1–23 (MKLQNTLILIGCLFLMGAMIGDA) is a signal peptide. 3 cysteine pairs are disulfide-bonded: C27–C47, C34–C52, and C46–C64.

In terms of tissue distribution, granular hemocytes, small secretory granules.

The protein resides in the secreted. In terms of biological role, exhibits stronger antimicrobial activity against the Gram-positive bacteria (S.aureus (IC(50)=4.2 ug/ml)) and fungi (C.albicans (IC(50)=3.0 ug/ml) and P.pastoris (IC(50)=0.5 ug/ml)) than Gram-negative bacteria (E.coli (IC(50)=25 ug/ml)). Binds to chitin (8.4 uM are required to obtain 50% of binding). Does not cause hemolysis on sheep erythrocytes. Has no blocking activity on the P-type calcium channel. Has also been shown to weakly inhibit Kv1.2/KCNA2 voltage-gated potassium channels and TRPV1 receptors. The polypeptide is Tachystatin-A2 (Tachypleus tridentatus (Japanese horseshoe crab)).